We begin with the raw amino-acid sequence, 309 residues long: Homoserine kinase (309 aa).

91–101 provides a ligand contact to ATP; it reads PIGSGLGSSAC.

The protein belongs to the GHMP kinase family. Homoserine kinase subfamily.

The protein resides in the cytoplasm. The enzyme catalyses L-homoserine + ATP = O-phospho-L-homoserine + ADP + H(+). The protein operates within amino-acid biosynthesis; L-threonine biosynthesis; L-threonine from L-aspartate: step 4/5. In terms of biological role, catalyzes the ATP-dependent phosphorylation of L-homoserine to L-homoserine phosphate. This is Homoserine kinase from Salmonella paratyphi B (strain ATCC BAA-1250 / SPB7).